A 310-amino-acid polypeptide reads, in one-letter code: Methionyl-tRNA formyltransferase (310 aa).

Position 109 to 112 (109 to 112 (SLLP)) interacts with (6S)-5,6,7,8-tetrahydrofolate.

This sequence belongs to the Fmt family.

It carries out the reaction L-methionyl-tRNA(fMet) + (6R)-10-formyltetrahydrofolate = N-formyl-L-methionyl-tRNA(fMet) + (6S)-5,6,7,8-tetrahydrofolate + H(+). In terms of biological role, attaches a formyl group to the free amino group of methionyl-tRNA(fMet). The formyl group appears to play a dual role in the initiator identity of N-formylmethionyl-tRNA by promoting its recognition by IF2 and preventing the misappropriation of this tRNA by the elongation apparatus. The sequence is that of Methionyl-tRNA formyltransferase from Pseudomonas putida (strain W619).